The following is a 308-amino-acid chain: GTPase Era (308 aa).

An Era-type G domain is found at 14 to 181; it reads RCGFVALIGA…RSTLAEMVPP (168 aa). The tract at residues 22-29 is G1; it reads GAPNVGKS. Residue 22–29 participates in GTP binding; the sequence is GAPNVGKS. The segment at 48–52 is G2; the sequence is QTTRA. Positions 69–72 are G3; the sequence is DTPG. GTP-binding positions include 69–73 and 131–134; these read DTPGI and NKVD. Residues 131–134 are G4; sequence NKVD. The interval 160–162 is G5; the sequence is IAA. In terms of domain architecture, KH type-2 spans 212–289; the sequence is LHQELPYQST…HLFLFVKVRE (78 aa).

Belongs to the TRAFAC class TrmE-Era-EngA-EngB-Septin-like GTPase superfamily. Era GTPase family. Monomer.

It is found in the cytoplasm. It localises to the cell inner membrane. In terms of biological role, an essential GTPase that binds both GDP and GTP, with rapid nucleotide exchange. Plays a role in 16S rRNA processing and 30S ribosomal subunit biogenesis and possibly also in cell cycle regulation and energy metabolism. The polypeptide is GTPase Era (Bradyrhizobium diazoefficiens (strain JCM 10833 / BCRC 13528 / IAM 13628 / NBRC 14792 / USDA 110)).